Here is a 179-residue protein sequence, read N- to C-terminus: Large ribosomal subunit protein uL5 (179 aa).

It belongs to the universal ribosomal protein uL5 family. In terms of assembly, part of the 50S ribosomal subunit; part of the 5S rRNA/L5/L18/L25 subcomplex. Contacts the 5S rRNA and the P site tRNA. Forms a bridge to the 30S subunit in the 70S ribosome.

This is one of the proteins that bind and probably mediate the attachment of the 5S RNA into the large ribosomal subunit, where it forms part of the central protuberance. In the 70S ribosome it contacts protein S13 of the 30S subunit (bridge B1b), connecting the 2 subunits; this bridge is implicated in subunit movement. Contacts the P site tRNA; the 5S rRNA and some of its associated proteins might help stabilize positioning of ribosome-bound tRNAs. The chain is Large ribosomal subunit protein uL5 from Prochlorococcus marinus (strain NATL1A).